The following is a 520-amino-acid chain: Cholesterol side-chain cleavage enzyme, mitochondrial (520 aa).

Residues 1–39 (MLARGLPLRSALVKACPPLLNTGREGWGHHRVGTGEGAG) constitute a mitochondrion transit peptide. The tract at residues 27-48 (WGHHRVGTGEGAGISTRTPRPY) is disordered. Heme is bound at residue Cys-461.

Belongs to the cytochrome P450 family. As to quaternary structure, interacts with FDX1/adrenodoxin. Heme serves as cofactor.

The protein resides in the mitochondrion inner membrane. It carries out the reaction 6 reduced [adrenodoxin] + cholesterol + 3 O2 + 6 H(+) = 4-methylpentanal + pregnenolone + 6 oxidized [adrenodoxin] + 4 H2O. The enzyme catalyses 2 reduced [adrenodoxin] + cholesterol + O2 + 2 H(+) = (22R)-hydroxycholesterol + 2 oxidized [adrenodoxin] + H2O. The catalysed reaction is (22R)-hydroxycholesterol + 2 reduced [adrenodoxin] + O2 + 2 H(+) = (20R,22R)-20,22-dihydroxycholesterol + 2 oxidized [adrenodoxin] + H2O. It catalyses the reaction (20R,22R)-20,22-dihydroxycholesterol + 2 reduced [adrenodoxin] + O2 + 2 H(+) = 4-methylpentanal + pregnenolone + 2 oxidized [adrenodoxin] + 2 H2O. Its pathway is lipid metabolism; C21-steroid hormone metabolism. It functions in the pathway steroid metabolism; cholesterol metabolism. Functionally, a cytochrome P450 monooxygenase that catalyzes the side-chain hydroxylation and cleavage of cholesterol to pregnenolone, the precursor of most steroid hormones. Catalyzes three sequential oxidation reactions of cholesterol, namely the hydroxylation at C22 followed with the hydroxylation at C20 to yield 20R,22R-hydroxycholesterol that is further cleaved between C20 and C22 to yield the C21-steroid pregnenolone and 4-methylpentanal. Mechanistically, uses molecular oxygen inserting one oxygen atom into a substrate and reducing the second into a water molecule. Two electrons are provided by NADPH via a two-protein mitochondrial transfer system comprising flavoprotein FDXR (adrenodoxin/ferredoxin reductase) and nonheme iron-sulfur protein FDX1 or FDX2 (adrenodoxin/ferredoxin). The protein is Cholesterol side-chain cleavage enzyme, mitochondrial of Capra hircus (Goat).